Consider the following 261-residue polypeptide: Cytochrome c oxidase subunit 3 (261 aa).

Topologically, residues 1 to 15 (MTHQTHAYHMVNPSP) are mitochondrial matrix. Residues 16-34 (WPLTGALSALLMTSGLIMW) traverse the membrane as a helical segment. Over 35-40 (FHFNST) the chain is Mitochondrial intermembrane. The chain crosses the membrane as a helical span at residues 41–66 (TLLMLGLTTNMLTMYQWWRDVIREST). Topologically, residues 67–72 (FQGHHT) are mitochondrial matrix. The helical transmembrane segment at 73–105 (PNVQKGLRYGMILFIISEVLFFTGFFWAFYHSS) threads the bilayer. The Mitochondrial intermembrane segment spans residues 106–128 (LAPTPELGGCWPPTGIHPLNPLE). A helical transmembrane segment spans residues 129 to 152 (VPLLNTSVLLASGVSITWAHHSLM). Topologically, residues 153-155 (EGN) are mitochondrial matrix. A helical membrane pass occupies residues 156-183 (RNHMLQALFITIALGVYFTLLQASEYYE). The Mitochondrial intermembrane segment spans residues 184 to 190 (APFTISD). Residues 191-223 (GVYGSTFFVATGFHGLHVIIGSTFLIVCFFRQL) form a helical membrane-spanning segment. Topologically, residues 224 to 232 (KFHFTSSHH) are mitochondrial matrix. The helical transmembrane segment at 233 to 256 (FGFEAAAWYWHFVDVVWLFLYVSI) threads the bilayer. Over 257–261 (YWWGS) the chain is Mitochondrial intermembrane.

It belongs to the cytochrome c oxidase subunit 3 family. As to quaternary structure, component of the cytochrome c oxidase (complex IV, CIV), a multisubunit enzyme composed of 14 subunits. The complex is composed of a catalytic core of 3 subunits MT-CO1, MT-CO2 and MT-CO3, encoded in the mitochondrial DNA, and 11 supernumerary subunits COX4I, COX5A, COX5B, COX6A, COX6B, COX6C, COX7A, COX7B, COX7C, COX8 and NDUFA4, which are encoded in the nuclear genome. The complex exists as a monomer or a dimer and forms supercomplexes (SCs) in the inner mitochondrial membrane with NADH-ubiquinone oxidoreductase (complex I, CI) and ubiquinol-cytochrome c oxidoreductase (cytochrome b-c1 complex, complex III, CIII), resulting in different assemblies (supercomplex SCI(1)III(2)IV(1) and megacomplex MCI(2)III(2)IV(2)).

Its subcellular location is the mitochondrion inner membrane. It catalyses the reaction 4 Fe(II)-[cytochrome c] + O2 + 8 H(+)(in) = 4 Fe(III)-[cytochrome c] + 2 H2O + 4 H(+)(out). Its function is as follows. Component of the cytochrome c oxidase, the last enzyme in the mitochondrial electron transport chain which drives oxidative phosphorylation. The respiratory chain contains 3 multisubunit complexes succinate dehydrogenase (complex II, CII), ubiquinol-cytochrome c oxidoreductase (cytochrome b-c1 complex, complex III, CIII) and cytochrome c oxidase (complex IV, CIV), that cooperate to transfer electrons derived from NADH and succinate to molecular oxygen, creating an electrochemical gradient over the inner membrane that drives transmembrane transport and the ATP synthase. Cytochrome c oxidase is the component of the respiratory chain that catalyzes the reduction of oxygen to water. Electrons originating from reduced cytochrome c in the intermembrane space (IMS) are transferred via the dinuclear copper A center (CU(A)) of subunit 2 and heme A of subunit 1 to the active site in subunit 1, a binuclear center (BNC) formed by heme A3 and copper B (CU(B)). The BNC reduces molecular oxygen to 2 water molecules using 4 electrons from cytochrome c in the IMS and 4 protons from the mitochondrial matrix. This is Cytochrome c oxidase subunit 3 (MT-CO3) from Gazella bennettii (Chinkara).